The chain runs to 225 residues: MTRSIIAVLPAAGVGSRMQADKPKQYLTLLGKTLLEHTLDVMLSYPAVSKIILAVSKDDPYISTLSLDPKIQLVEGGTTRAESVLNGLNAIAEKNAWVLVHDAARPCLQHADIDKLLAIEDKQGAILAIPVTDTIKRADNQQCIVKTEDRSQLWQAMTPQFFPVDILRDALSTGIQQGANITDEASAIELAGFRPHLVAGRSDNLKVTRPEDLALAEFYLTRNKL.

This sequence belongs to the IspD/TarI cytidylyltransferase family. IspD subfamily.

It carries out the reaction 2-C-methyl-D-erythritol 4-phosphate + CTP + H(+) = 4-CDP-2-C-methyl-D-erythritol + diphosphate. The protein operates within isoprenoid biosynthesis; isopentenyl diphosphate biosynthesis via DXP pathway; isopentenyl diphosphate from 1-deoxy-D-xylulose 5-phosphate: step 2/6. Catalyzes the formation of 4-diphosphocytidyl-2-C-methyl-D-erythritol from CTP and 2-C-methyl-D-erythritol 4-phosphate (MEP). This chain is 2-C-methyl-D-erythritol 4-phosphate cytidylyltransferase, found in Haemophilus influenzae (strain 86-028NP).